The primary structure comprises 416 residues: Gamma-glutamyl phosphate reductase (416 aa).

Belongs to the gamma-glutamyl phosphate reductase family.

Its subcellular location is the cytoplasm. The enzyme catalyses L-glutamate 5-semialdehyde + phosphate + NADP(+) = L-glutamyl 5-phosphate + NADPH + H(+). It participates in amino-acid biosynthesis; L-proline biosynthesis; L-glutamate 5-semialdehyde from L-glutamate: step 2/2. In terms of biological role, catalyzes the NADPH-dependent reduction of L-glutamate 5-phosphate into L-glutamate 5-semialdehyde and phosphate. The product spontaneously undergoes cyclization to form 1-pyrroline-5-carboxylate. This is Gamma-glutamyl phosphate reductase from Halalkalibacterium halodurans (strain ATCC BAA-125 / DSM 18197 / FERM 7344 / JCM 9153 / C-125) (Bacillus halodurans).